Reading from the N-terminus, the 219-residue chain is Small ribosomal subunit protein uS2m (219 aa).

It belongs to the universal ribosomal protein uS2 family. As to quaternary structure, component of the mitochondrial ribosome small subunit.

It localises to the mitochondrion. This is Small ribosomal subunit protein uS2m (RPS2) from Arabidopsis thaliana (Mouse-ear cress).